The sequence spans 465 residues: Cysteine--tRNA ligase (465 aa).

Zn(2+) is bound at residue cysteine 29. A 'HIGH' region motif is present at residues 31 to 41 (PTVYNYIHIGN). Residues cysteine 209, histidine 234, and glutamate 238 each coordinate Zn(2+). Positions 266–270 (KMSKS) match the 'KMSKS' region motif. Lysine 269 lines the ATP pocket. Phosphoserine is present on serine 270.

It belongs to the class-I aminoacyl-tRNA synthetase family. Monomer. Zn(2+) is required as a cofactor.

It is found in the cytoplasm. It catalyses the reaction tRNA(Cys) + L-cysteine + ATP = L-cysteinyl-tRNA(Cys) + AMP + diphosphate. The chain is Cysteine--tRNA ligase from Bacillus cereus (strain ATCC 10987 / NRS 248).